Reading from the N-terminus, the 327-residue chain is Annexin A8 (327 aa).

4 Annexin repeats span residues 21-92 (FNPD…ALMY), 93-164 (PPYR…CLLQ), 177-249 (GLAL…TVVK), and 253-324 (NVHS…NLVG). The Ca(2+) site is built by M266, G268, G270, and D310.

The protein belongs to the annexin family.

In terms of biological role, this protein is an anticoagulant protein that acts as an indirect inhibitor of the thromboplastin-specific complex, which is involved in the blood coagulation cascade. This chain is Annexin A8 (Anxa8), found in Rattus norvegicus (Rat).